A 929-amino-acid polypeptide reads, in one-letter code: Dual serine/threonine and tyrosine protein kinase (929 aa).

Over residues 1-14 (MEGDGVPWGSEPVS) the composition is skewed to low complexity. Residues 1–21 (MEGDGVPWGSEPVSGPGPGGG) form a disordered region. 2 coiled-coil regions span residues 189 to 215 (EEDLEVQENNEDAAHVLAELEVTMHHA) and 395 to 431 (RKKENELYESLMNIANRKQEEMKDMIVETLNTMKEEL). The Protein kinase domain maps to 652 to 906 (PKLGQELGRG…PLLGIVQPML (255 aa)). ATP is bound by residues 658–666 (LGRGQYGVV) and Lys-681. Residue Asp-777 is the Proton acceptor of the active site.

It belongs to the protein kinase superfamily. Ser/Thr protein kinase family. As to expression, predominantly expressed in skeletal muscle and testis. Expressed in basolateral and apical membranes of all tubular epithelia. Expressed in thin ascending limb of the loop of Henle and the distal convoluted tubule. Expressed in all layers of transitional ureteric epithelium and in the ureteric smooth-muscle cells. Weakly expressed in heart, brain, placenta, kidney, pancreas, spleen, thymus, prostate, uterus, small intestine, white blood cells, stomach, spinal cord and adrenal gland. Is widely distributed in the CNS. Also detected in several tumor cell lines. Expressed in the skin.

It is found in the cytoplasm. The protein localises to the cell membrane. Its subcellular location is the apical cell membrane. The protein resides in the basolateral cell membrane. It localises to the cell junction. It catalyses the reaction L-seryl-[protein] + ATP = O-phospho-L-seryl-[protein] + ADP + H(+). It carries out the reaction L-threonyl-[protein] + ATP = O-phospho-L-threonyl-[protein] + ADP + H(+). The catalysed reaction is L-tyrosyl-[protein] + ATP = O-phospho-L-tyrosyl-[protein] + ADP + H(+). Its function is as follows. Acts as a positive regulator of ERK phosphorylation downstream of fibroblast growth factor-receptor activation. Involved in the regulation of both caspase-dependent apoptosis and caspase-independent cell death. In the skin, it plays a predominant role in suppressing caspase-dependent apoptosis in response to UV stress in a range of dermal cell types. In Homo sapiens (Human), this protein is Dual serine/threonine and tyrosine protein kinase (DSTYK).